We begin with the raw amino-acid sequence, 546 residues long: MLSEVIARVELLIGEQTLSGGILTFLFIVVIAHFVLTRFTVHSRFWNSQAWTGVREEWFPKMRAKVRTIGNIRQMLSDGYEGFSKQNKAFALPVIAEKPWLVLPHSCIPELLAKSDSEIDMKIIHEEQLMHEYTTGSLGRHVVDVPIQYDILLRQVNRKLPLLISAFNEELDKSFCHYWGTDTSYSEVNLSETCEKIVTQALNRIFAGKEICRDEGFLEHSRLYSEGVGRNAIMVRMLPPLLRPLLAPFITYSNRKHRDICLRVCLPVIRERVQHTAAKRADAEHKWEPPLDVLQWIIEESFARNDPKELDPRMITQRLLALNFVAIDTTHMSMAHTILDLYRSPNSDDFLVGLREECERVLQANGGQWTKSGLDDLVCVDSTIRESMRYSDLGYISLTRMVVDPKGTQFNANGTNSSSPLSVPPGIRICVPAHAIHRDAALYPSPYEFQAFRFSKAREKYRGTQTELSEPKVSIVTTTDKFLPFGHGRHACPGRFFAAQQMKLMLAYLVQNYDVEKLSTKIQNKIMVGTTKPDASLKIKVKRRKV.

Residues T17–T37 form a helical membrane-spanning segment. N189, N413, and N416 each carry an N-linked (GlcNAc...) asparagine glycan. C492 contacts heme.

The protein belongs to the cytochrome P450 family. Heme is required as a cofactor.

It is found in the membrane. It functions in the pathway mycotoxin biosynthesis. In terms of biological role, cytochrome P450 monooxygenase; part of the gene cluster that mediates the biosynthesis of pneumocandins, lipohexapeptides of the echinocandin family that prevent fungal cell wall formation by non-competitive inhibition of beta-1,3-glucan synthase. The 10,12-dimethylmyristoyl side chain is synthesized by the reducing polyketide synthase gloL/GLPKS4. The thioesterase gloN/GLHYD exclusively interacts with gloL/GLPKS4 to maintain turnover of the polyketide side chain. The 10R,12S-dimethylmyristic acid is then transferred to the first thiolation domain of the nonribosomal peptide synthetase gloA/GLNRPS4 by the acyl-AMP ligase gloD/GLligase, followed by its acylation to L-ornithine to trigger elongation of the cyclic hexapeptide. L-ornithine, 4R-hydroxyl-L-proline (generated from L-proline by the dioxygenase gloF/GLOXY2), 3S-hydroxyl-L-homotyrosine (generated by gloG/GLHtyB, gloH/GLHtyA, gloI/GLHtyC, gloJ/GLHtyD and hydroxylated at C-3 by the dioxygenase gloM/GLOXY1), 3R-hydroxyl-L-glutamine (generated from L-glutamine probably by the dioxygenase gloE/GLOXY3) and 3S-hydroxyl-L-proline (generated from L-proline by the dioxygenase gloF/GLOXY2 to yield pneumocandin B0), or 3S-hydroxyl-4S-methyl-L-proline (generated from L-leucine by the dioxygenase gloC/GLOXY4 to yield pneumocandin A0) are sequentially added to the growing chain. The last C domain of gloA/GLNRPS4 is proposed to be responsible for cyclization by condensation to form the peptide bond between L-ornithine and 3S-hydroxyl-4S-methyl-L-proline (for pneumocandin A0) or 3S-hydroxyl-L-proline (for pneumocandin B0). Finally, the subsequent C-4 hydroxylation of 3S-hydroxyl-L-homotyrosine and L-ornithine dihydroxylation at C-4 and C-5 are performed by the cytochrome P450 monooxygenases gloP/GLP450-1 and gloO/GLP450-2, respectively. This is Cytochrome P450 monooxygenase gloP from Glarea lozoyensis (strain ATCC 20868 / MF5171).